The following is a 611-amino-acid chain: MEIFKEEEEEAFSAIEGIIYACEVYDPVPRHLHKSKTKIINAAKLIIETHLSYYTILNNISDIQAYLSTWLRDLGTTGSYQTILSESISLMFDRTVSIFRKCTIEGGFPHLIARLYLRLKSYQKLLSDAGLKIFFSSYDYAFGAAYNLVNCSEYRYDEVHYISNGTYSLVASMKIDPAEVIKREHFRLTIPKFNISNILIEIFHLLDGLAFFKVNPDSLSISTASAETIFHSISEGNHQVLELGRSLMFPLLKTGDFEICRIDDAGAVITFTEAKDVKLEIISLDEVSWVMQWKSCLQNYERKAANDSSFIKTHLQFKKANNFNEDNNGLGLIVDRNIPTDDFMLASTNRQSPPPSNTGCSLHRSKPLHIPLSSVIREDFYDSSLNERISKDGDSSCESFSGAESILSDYDFHDNEFFNNQSPHYFSEHIDNNSREVVITDENTIISLENTQVSRWSNYSWQKISPHQLQVSIIQLRMGNFIVAYNSDHNLHQFKIRLCDDIKCIQSTEQDIQIRVPLGAIMCSVTGILNIRTKDADKLLRVLSFYTTDHTEAVSHSNNQDATASPLSSVSSAMDLKHSLQKCSSTIMPQELTQDVIGSKSDLISNIRQKI.

The protein belongs to the UPF0508 family.

The polypeptide is UPF0508 protein SCY_3114 (Saccharomyces cerevisiae (strain YJM789) (Baker's yeast)).